We begin with the raw amino-acid sequence, 248 residues long: MADS-box transcription factor 8 (248 aa).

An MADS-box domain is found at 1–61; the sequence is MGRGRVELKR…GKLYEFCSGQ (61 aa). One can recognise a K-box domain in the interval 90 to 180; it reads VQSSRNEYLK…RRKLEESNQL (91 aa).

May interact with the K-box of MADS6 and MADS16. May interact with MADS13 and MADS18. Binds to FCA. As to expression, expressed in lodicules, stamens and carpels.

The protein resides in the nucleus. In terms of biological role, probable transcription factor. May be involved in the control of flowering time. The chain is MADS-box transcription factor 8 (MADS8) from Oryza sativa subsp. japonica (Rice).